A 101-amino-acid polypeptide reads, in one-letter code: Interleukin-8 (101 aa).

Residues 1 to 22 form the signal peptide; that stretch reads MTSKLAVALLAAFVLSAALCEA. A Citrulline modification is found at Arg27. Intrachain disulfides connect Cys34–Cys61 and Cys36–Cys77.

This sequence belongs to the intercrine alpha (chemokine CxC) family. Homodimer. Interacts with TNFAIP6 (via Link domain); this interaction interferes with chemokine binding to glycosaminoglycans. Post-translationally, citrullination at Arg-27 prevents proteolysis, and dampens tissue inflammation, it also enhances leukocytosis, possibly through impaired chemokine clearance from the blood circulation.

The protein resides in the secreted. Functionally, chemotactic factor that mediates inflammatory response by attracting neutrophils, basophils, and T-cells to clear pathogens and protect the host from infection. Also plays an important role in neutrophil activation. Released in response to an inflammatory stimulus, exerts its effect by binding to the G-protein-coupled receptors CXCR1 and CXCR2, primarily found in neutrophils, monocytes and endothelial cells. G-protein heterotrimer (alpha, beta, gamma subunits) constitutively binds to CXCR1/CXCR2 receptor and activation by IL8 leads to beta and gamma subunits release from Galpha (GNAI2 in neutrophils) and activation of several downstream signaling pathways including PI3K and MAPK pathways. The protein is Interleukin-8 (CXCL8) of Canis lupus familiaris (Dog).